Here is a 248-residue protein sequence, read N- to C-terminus: MVRYKATISYDGTLFSGFQRQPNARSIQEEIEKTLLRLNSGTPVTVHGAGRTDAGVHAYGQVIHFDLPQERDPEKLRFGLDTQCPDDIDIVSIELVSEEFHARYSKHIKTYEFLVDAGRPKNPMMRNYAIHYPYPLSLALMQEAAMELVGTHDFTGFTASGTSVENKVRTITQASVSIDEKTGFYVFAFSGNGFLYKQVRNMVGTLLKIGNGRMPVSQVKTVLESRDRNLAGPTVAGNGLYLKEIRYE.

The active-site Nucleophile is the D53. Y111 contacts substrate.

Belongs to the tRNA pseudouridine synthase TruA family. Homodimer.

The catalysed reaction is uridine(38/39/40) in tRNA = pseudouridine(38/39/40) in tRNA. Its function is as follows. Formation of pseudouridine at positions 38, 39 and 40 in the anticodon stem and loop of transfer RNAs. The protein is tRNA pseudouridine synthase A of Streptococcus thermophilus (strain CNRZ 1066).